A 131-amino-acid chain; its full sequence is Cystatin-like cysteine protease inhibitor EPIC3 (131 aa).

The signal sequence occupies residues 1–22; the sequence is MAFTRSIALFAGLALAASSAQG. An N-linked (GlcNAc...) asparagine glycan is attached at Asn-33. The Secondary area of contact signature appears at 71–75; the sequence is QTVAG.

The protein belongs to the cystatin family.

It is found in the secreted. Its function is as follows. Secreted effector that interacts with and inhibits host apoplastic pathogenesis-related papain-like cysteine proteases. Inhibition of host proteases by a pathogen extracellular protease inhibitor forms a specific type of defense-counterdefense mechanism between plants and microbial pathogens. The polypeptide is Cystatin-like cysteine protease inhibitor EPIC3 (Phytophthora infestans (strain T30-4) (Potato late blight agent)).